The following is a 364-amino-acid chain: FNIP repeat-containing protein DDB_G0277323 (364 aa).

5 FNIP repeats span residues 57 to 98, 155 to 198, 214 to 244, 245 to 271, and 295 to 340; these read MNIE…DLKY, YDCL…FGWT, LRVL…FGSS, FNQV…NQPI, and FNQP…FINN.

This is FNIP repeat-containing protein DDB_G0277323 from Dictyostelium discoideum (Social amoeba).